A 371-amino-acid polypeptide reads, in one-letter code: DNA replication and repair protein RecF (371 aa).

ATP is bound at residue 30–37 (GENAQGKT).

It belongs to the RecF family.

Its subcellular location is the cytoplasm. The RecF protein is involved in DNA metabolism; it is required for DNA replication and normal SOS inducibility. RecF binds preferentially to single-stranded, linear DNA. It also seems to bind ATP. The protein is DNA replication and repair protein RecF of Staphylococcus epidermidis (strain ATCC 12228 / FDA PCI 1200).